The chain runs to 399 residues: PCI domain-containing protein 2 (399 aa).

The PCI domain occupies 210–391 (VTYKYYVGRK…QKLVVSKQNP (182 aa)).

It belongs to the CSN12 family.

The chain is PCI domain-containing protein 2 (pcid2) from Danio rerio (Zebrafish).